A 179-amino-acid chain; its full sequence is Apoptosis regulator Bcl-2 homolog (179 aa).

Positions 76–95 match the BH1 motif; it reads ELFKDLINWGRICGFIVFSA. Residues 126 to 141 carry the BH2 motif; sequence PWMISHGGQEEFLAFS.

Belongs to the Bcl-2 family. As to quaternary structure, interacts with host BECN1 (via BH3 homology domain); this interaction allows the virus to inhibit BECN1, and thus autophagy. Interacts with host BID. Interacts with host BAX.

The protein resides in the host mitochondrion. Its subcellular location is the host endoplasmic reticulum. Suppresses apoptosis in host cell to promote the viral replication. Has the ability to potentially bind to all the members of the proapoptotic Bcl-2 family. Inhibits autophagy by interacting with host Beclin 1 (BECN1). The sequence is that of Apoptosis regulator Bcl-2 homolog from African swine fever virus (isolate Pig/Kenya/KEN-50/1950) (ASFV).